An 82-amino-acid polypeptide reads, in one-letter code: Small ribosomal subunit protein bS16 (82 aa).

It belongs to the bacterial ribosomal protein bS16 family.

This Haemophilus ducreyi (strain 35000HP / ATCC 700724) protein is Small ribosomal subunit protein bS16.